The primary structure comprises 61 residues: UPF0370 protein SG1720 (61 aa).

The chain crosses the membrane as a helical span at residues 3–23; sequence WLADYWWVVLLVLAGMLIGGV. Over residues 37 to 47 the composition is skewed to basic and acidic residues; sequence NRPELPPHRDN. Residues 37–61 form a disordered region; that stretch reads NRPELPPHRDNNAQWDEEDDWPKKP. The segment covering 51–61 has biased composition (acidic residues); that stretch reads WDEEDDWPKKP.

It belongs to the UPF0370 family.

The protein resides in the cell membrane. The chain is UPF0370 protein SG1720 from Sodalis glossinidius (strain morsitans).